The following is a 161-amino-acid chain: MLKLVKMFSDGSCLGNPGSGGYGTILRYKLHEKILTSGFFLTTNNRMELMGVICGLESLKESCIVEITIDSQYVKQGITNWIATWEKKKWKTTKKKLIKNLDLWLRINAVIKNHHITWFWVKAHMGHLENERCDKIARQSAQSPSVKDFFYENNFYQNKNL.

The RNase H type-1 domain occupies 1–142 (MLKLVKMFSD…CDKIARQSAQ (142 aa)). Mg(2+) is bound by residues Asp-10, Glu-48, Asp-70, and Asp-134.

Belongs to the RNase H family. As to quaternary structure, monomer. Mg(2+) is required as a cofactor.

Its subcellular location is the cytoplasm. The catalysed reaction is Endonucleolytic cleavage to 5'-phosphomonoester.. In terms of biological role, endonuclease that specifically degrades the RNA of RNA-DNA hybrids. In Buchnera aphidicola subsp. Schizaphis graminum (strain Sg), this protein is Ribonuclease H (rnhA).